The primary structure comprises 432 residues: Adenylosuccinate synthetase (432 aa).

GTP contacts are provided by residues 13-19 (GDEGKGK) and 41-43 (GHT). Asp-14 (proton acceptor) is an active-site residue. Residues Asp-14 and Gly-41 each coordinate Mg(2+). IMP is bound by residues 14–17 (DEGK), 39–42 (NAGH), Thr-130, Arg-144, Gln-225, Thr-240, and Arg-304. Residue His-42 is the Proton donor of the active site. 300-306 (ATTGRSR) contributes to the substrate binding site. Residues Arg-306, 332-334 (KLD), and 415-417 (STG) contribute to the GTP site.

Belongs to the adenylosuccinate synthetase family. Homodimer. It depends on Mg(2+) as a cofactor.

The protein localises to the cytoplasm. The catalysed reaction is IMP + L-aspartate + GTP = N(6)-(1,2-dicarboxyethyl)-AMP + GDP + phosphate + 2 H(+). It participates in purine metabolism; AMP biosynthesis via de novo pathway; AMP from IMP: step 1/2. Its function is as follows. Plays an important role in the de novo pathway of purine nucleotide biosynthesis. Catalyzes the first committed step in the biosynthesis of AMP from IMP. This Proteus mirabilis (strain HI4320) protein is Adenylosuccinate synthetase.